The sequence spans 502 residues: Neuronal acetylcholine receptor subunit alpha-7 (502 aa).

An N-terminal signal peptide occupies residues Met1–Gln22. At Gly23–Tyr233 the chain is on the extracellular side. Residues Arg42 and Val44 each contribute to the Ca(2+) site. Asn46, Asn90, and Asn133 each carry an N-linked (GlcNAc...) asparagine glycan. The cysteines at positions 150 and 164 are disulfide-linked. Ca(2+) contacts are provided by Ser172 and Tyr210. Cys212 and Cys213 are disulfide-bonded. Helical transmembrane passes span Gly234–Leu254, Ile262–Ile282, and Gln295–Leu315. The tract at residues Glu260–Thr267 is essential for TMEM35A/NACHO-mediated proper subunit assembly and trafficking to cell membrane. Residues Arg316–Arg469 lie on the Cytoplasmic side of the membrane. Residues Leu470–Ala490 traverse the membrane as a helical segment.

It belongs to the ligand-gated ion channel (TC 1.A.9) family. Acetylcholine receptor (TC 1.A.9.1) subfamily. Alpha-7/CHRNA7 sub-subfamily. Homopentamer. Can also form heteropentamers with CHRNB2, mainly found in basal forebrain cholinergic neurons. Interacts with RIC3; which is required for proper folding and assembly. Interacts with LYPD6. Interacts with CANX. Post-translationally, glycosylations at Asn-46, Asn-90 and Asn-133 are essential for TMEM35A/NACHO-mediated proper subunit assembly and trafficking to the cell membrane. In terms of tissue distribution, higly expressed in brain. ALso expressed in immune cells sucha as macrophages.

It localises to the postsynaptic cell membrane. Its subcellular location is the cell membrane. It catalyses the reaction K(+)(in) = K(+)(out). It carries out the reaction Na(+)(in) = Na(+)(out). The enzyme catalyses Ca(2+)(in) = Ca(2+)(out). The catalysed reaction is choline(out) = choline(in). It catalyses the reaction NH4(+)(in) = NH4(+)(out). It carries out the reaction L-arginine(in) = L-arginine(out). The enzyme catalyses guanidine(out) = guanidine(in). With respect to regulation, activated by a myriad of ligands such as acetylcholine, cytisine, nicotine, choline and epibatidine. Oligomeric amyloid-beta protein 42 activates specifially CHRNA7:CHRNB2 nAchRs. Activity is modulated by positive allosteric modulators (PAMs), such as flavonoids, with a wide range of chemical diversity, pharmacological sensitivity and efficacy. AChR activity is inhibited by the antagonists alpha-conotoxons RgIA, ImI and ImII, small disulfide-constrained peptides from cone snails. Component of neuronal acetylcholine receptors (nAChRs) that function as pentameric, ligand-gated cation channels with high calcium permeability among other activities. nAChRs are excitatory neurotrasnmitter receptors formed by a collection of nAChR subunits known to mediate synaptic transmission in the nervous system and the neuromuscular junction. Each nAchR subunit confers differential attributes to channel properties, including activation, deactivation and desensitization kinetics, pH sensitivity, cation permeability, and binding to allosteric modulators. CHRNA7 forms homopentameric neuronal acetylcholine receptors abundantly expressed in the central nervous system, characterized by fast desensitization and high calcium permeability. Also forms heteropentamers with CHRNB2, mainly expressed in basal forebrain cholinergic neurons. Involved in the modulation of calcium-dependent signaling pathways and influences the release of neurotransmitters, including dopamine, glutamate and GABA. Involved in the modulation of calcium-dependent signaling pathways and influences the release of neurotransmitters, including dopamine, glutamate and GABA. Also expressed in non-neuronal cells such as immune cells like lymphocytes, monocytes and macrophages. In T cells, activation induces metabotropic signaling that results in an increase of intracellular Ca2+ concentrations, independent of ionotropic receptor functions. In macrophages, required for acetylcholine-mediated inhibition of TNF and other inflammatory cytokine release. Once activated by acetylcholine, nicotine or other agonists, selectively inhibits production of pro-inflammatory cytokines while leaving anti-inflammatory cytokines undisturbed. Stimulates the cholinergic anti-inflammatory pathway, controlling inflammation by inhibiting NFKB nuclear translocation and activating the JAK2-STAT3 pathway, independently of ion channel activity. Also expressed in the urothelium where it modulates reflex bladder activity by increasing intracellular calcium through internal stores and decreasing basal ATP release. The protein is Neuronal acetylcholine receptor subunit alpha-7 (Chrna7) of Mus musculus (Mouse).